The following is an 812-amino-acid chain: Phospholipase D alpha 2 (812 aa).

A propeptide spanning residues 1 to 36 (MAQHLLHGTLHATIYEVDALHTGGLRSAGFLGKIIS) is cleaved from the precursor. Residues 1–127 (MAQHLLHGTL…INGEEVEKWV (127 aa)) form the C2 domain. The PLD phosphodiesterase 1 domain maps to 328–368 (AMFTHHQKIVVVDSEVPSQGGGSEMRRIMSFVGGIDLCDGR). Active-site residues include H333, K335, and D340. A 1,2-diacyl-sn-glycero-3-phosphate is bound at residue H333. Ca(2+) is bound at residue H374. Residues Q524 and H663 each contribute to the a 1,2-diacyl-sn-glycero-3-phosphate site. The 28-residue stretch at 658 to 685 (FMIYVHSKMMIVDDEYIIVGSANINQRS) folds into the PLD phosphodiesterase 2 domain. Active-site residues include H663, K665, and D670. E724 lines the Ca(2+) pocket.

This sequence belongs to the phospholipase D family. C2-PLD subfamily. The cofactor is Ca(2+).

It is found in the cytoplasm. The protein resides in the membrane. The catalysed reaction is a 1,2-diacyl-sn-glycero-3-phosphocholine + H2O = a 1,2-diacyl-sn-glycero-3-phosphate + choline + H(+). Its function is as follows. Hydrolyzes glycerol-phospholipids at the terminal phosphodiesteric bond. Plays an important role in various cellular processes, including phytohormone action, vesicular trafficking, secretion, cytoskeletal arrangement, meiosis, tumor promotion, pathogenesis, membrane deterioration and senescence. The sequence is that of Phospholipase D alpha 2 (PLD2) from Brassica oleracea var. capitata (Cabbage).